The sequence spans 597 residues: MRSQGTCDNAAAMSGILKRKFEDVDASSPCSSARESDDEVSSSESADSGDSVNPSTSNHFTPSSILKREKRLRTKNVHFSCVTVYYFTRRQGFTSVPSQGGSTLGMSSRHNSVRQYTLGEFAREQERLHREMLREHLREEKLNSLKLKMTKNGTVESEEASTLTVDDISDDDIDLDNTEVDEYFFLQPLPTKKRRALLRASGVKKIDVDEKHELRAIRLSREDCGCDCRVFCDPETCTCSLAGIKCQVDRMSFPCGCTKEGCSNTAGRIEFNPIRVRTHFLHTIMKLELEKNREQQTPTLNGCHGEISAHGPSMGPVAHSVEYSIADNFEIETEPQAAVLHLQEELDCQGDEEEEEEDGSSFCSGATDSSTQSLAPSESDEEEEEEEEEEEEEEEDDDDDKGDGFVEGLGAHTEVVPLPSVLCYSDGTAVHESHTKNASFYASSSTLYYQIDSHIPGTPSQLSDNYSERDTVKNGALSLVPYAMTPERFVDYARQAEEAYGASHYPAANPSVIVCCPTSENDSGVPCNPLYPEHRSNLPQVEFHSYLKGPAQEGFVSTLNGDSHISEHPAENPLSLAEKSRLHEECIQSPVVETVPV.

Disordered stretches follow at residues 22-64 (EDVD…TPSS) and 348-407 (CQGD…GFVE). Positions 42–52 (SSESADSGDSV) are enriched in low complexity. Over residues 53-64 (NPSTSNHFTPSS) the composition is skewed to polar residues. Acidic residues predominate over residues 348–359 (CQGDEEEEEEDG). The segment covering 361 to 376 (SFCSGATDSSTQSLAP) has biased composition (polar residues). Residues 378-401 (ESDEEEEEEEEEEEEEEEDDDDDK) show a composition bias toward acidic residues.

It belongs to the AXUD1 family. Detected only in the brain of 15 dpc, 18 dpc, newborn and P6 mice (at protein level).

The protein resides in the nucleus. Its function is as follows. Binds to the consensus sequence 5'-AGAGTG-3' and has transcriptional activator activity. Plays a role in apoptosis. The chain is Cysteine/serine-rich nuclear protein 3 (Csrnp3) from Mus musculus (Mouse).